The sequence spans 178 residues: Peptide methionine sulfoxide reductase MsrA (178 aa).

C11 is a catalytic residue.

This sequence belongs to the MsrA Met sulfoxide reductase family.

The enzyme catalyses L-methionyl-[protein] + [thioredoxin]-disulfide + H2O = L-methionyl-(S)-S-oxide-[protein] + [thioredoxin]-dithiol. The catalysed reaction is [thioredoxin]-disulfide + L-methionine + H2O = L-methionine (S)-S-oxide + [thioredoxin]-dithiol. Its function is as follows. Has an important function as a repair enzyme for proteins that have been inactivated by oxidation. Catalyzes the reversible oxidation-reduction of methionine sulfoxide in proteins to methionine. The chain is Peptide methionine sulfoxide reductase MsrA from Natronomonas pharaonis (strain ATCC 35678 / DSM 2160 / CIP 103997 / JCM 8858 / NBRC 14720 / NCIMB 2260 / Gabara) (Halobacterium pharaonis).